The following is a 420-amino-acid chain: Histidine--tRNA ligase (420 aa).

It belongs to the class-II aminoacyl-tRNA synthetase family. Homodimer.

Its subcellular location is the cytoplasm. The catalysed reaction is tRNA(His) + L-histidine + ATP = L-histidyl-tRNA(His) + AMP + diphosphate + H(+). The polypeptide is Histidine--tRNA ligase (Streptomyces avermitilis (strain ATCC 31267 / DSM 46492 / JCM 5070 / NBRC 14893 / NCIMB 12804 / NRRL 8165 / MA-4680)).